Consider the following 440-residue polypeptide: tRNA-2-methylthio-N(6)-dimethylallyladenosine synthase (440 aa).

Residues 4–122 (KSYYIITHGC…LPKILERVFE (119 aa)) enclose the MTTase N-terminal domain. Residues Cys13, Cys49, Cys83, Cys159, Cys163, and Cys166 each contribute to the [4Fe-4S] cluster site. The Radical SAM core domain maps to 145–375 (REPGVRAWVT…IELQNGISLE (231 aa)). The TRAM domain occupies 378–440 (KNEEGNIHEI…KLFHLEGVLV (63 aa)).

It belongs to the methylthiotransferase family. MiaB subfamily. Monomer. [4Fe-4S] cluster is required as a cofactor.

It is found in the cytoplasm. The enzyme catalyses N(6)-dimethylallyladenosine(37) in tRNA + (sulfur carrier)-SH + AH2 + 2 S-adenosyl-L-methionine = 2-methylsulfanyl-N(6)-dimethylallyladenosine(37) in tRNA + (sulfur carrier)-H + 5'-deoxyadenosine + L-methionine + A + S-adenosyl-L-homocysteine + 2 H(+). In terms of biological role, catalyzes the methylthiolation of N6-(dimethylallyl)adenosine (i(6)A), leading to the formation of 2-methylthio-N6-(dimethylallyl)adenosine (ms(2)i(6)A) at position 37 in tRNAs that read codons beginning with uridine. This Carboxydothermus hydrogenoformans (strain ATCC BAA-161 / DSM 6008 / Z-2901) protein is tRNA-2-methylthio-N(6)-dimethylallyladenosine synthase.